Consider the following 337-residue polypeptide: Phenylalanine--tRNA ligase alpha subunit (337 aa).

Glutamate 258 lines the Mg(2+) pocket.

The protein belongs to the class-II aminoacyl-tRNA synthetase family. Phe-tRNA synthetase alpha subunit type 1 subfamily. As to quaternary structure, tetramer of two alpha and two beta subunits. The cofactor is Mg(2+).

The protein resides in the cytoplasm. It catalyses the reaction tRNA(Phe) + L-phenylalanine + ATP = L-phenylalanyl-tRNA(Phe) + AMP + diphosphate + H(+). This chain is Phenylalanine--tRNA ligase alpha subunit, found in Burkholderia thailandensis (strain ATCC 700388 / DSM 13276 / CCUG 48851 / CIP 106301 / E264).